Reading from the N-terminus, the 425-residue chain is UDP-N-acetylglucosamine 1-carboxyvinyltransferase (425 aa).

23–24 is a binding site for phosphoenolpyruvate; sequence KN. UDP-N-acetyl-alpha-D-glucosamine is bound at residue R100. C124 functions as the Proton donor in the catalytic mechanism. A 2-(S-cysteinyl)pyruvic acid O-phosphothioketal modification is found at C124. 2 residues coordinate UDP-N-acetyl-alpha-D-glucosamine: D313 and I335.

Belongs to the EPSP synthase family. MurA subfamily.

Its subcellular location is the cytoplasm. The catalysed reaction is phosphoenolpyruvate + UDP-N-acetyl-alpha-D-glucosamine = UDP-N-acetyl-3-O-(1-carboxyvinyl)-alpha-D-glucosamine + phosphate. It participates in cell wall biogenesis; peptidoglycan biosynthesis. Its function is as follows. Cell wall formation. Adds enolpyruvyl to UDP-N-acetylglucosamine. This chain is UDP-N-acetylglucosamine 1-carboxyvinyltransferase, found in Wolbachia sp. subsp. Drosophila simulans (strain wRi).